Consider the following 426-residue polypeptide: D-tagatose-1,6-bisphosphate aldolase subunit KbaZ (426 aa).

Belongs to the GatZ/KbaZ family. KbaZ subfamily. Forms a complex with KbaY.

Its pathway is carbohydrate metabolism; D-tagatose 6-phosphate degradation; D-glyceraldehyde 3-phosphate and glycerone phosphate from D-tagatose 6-phosphate: step 2/2. Its function is as follows. Component of the tagatose-1,6-bisphosphate aldolase KbaYZ that is required for full activity and stability of the Y subunit. Could have a chaperone-like function for the proper and stable folding of KbaY. When expressed alone, KbaZ does not show any aldolase activity. The protein is D-tagatose-1,6-bisphosphate aldolase subunit KbaZ of Escherichia coli O6:K15:H31 (strain 536 / UPEC).